The primary structure comprises 341 residues: Phenylalanine--tRNA ligase alpha subunit (341 aa).

Glutamate 254 lines the Mg(2+) pocket.

It belongs to the class-II aminoacyl-tRNA synthetase family. Phe-tRNA synthetase alpha subunit type 1 subfamily. In terms of assembly, tetramer of two alpha and two beta subunits. It depends on Mg(2+) as a cofactor.

It localises to the cytoplasm. The enzyme catalyses tRNA(Phe) + L-phenylalanine + ATP = L-phenylalanyl-tRNA(Phe) + AMP + diphosphate + H(+). The sequence is that of Phenylalanine--tRNA ligase alpha subunit (pheS) from Mycoplasma pneumoniae (strain ATCC 29342 / M129 / Subtype 1) (Mycoplasmoides pneumoniae).